We begin with the raw amino-acid sequence, 353 residues long: Fasciclin-like arabinogalactan protein 21 (353 aa).

The N-terminal stretch at 1–28 (MGCCSSDCFVYFILSIALAFMAISTTLR) is a signal peptide. N51, N81, N94, N200, N249, and N315 each carry an N-linked (GlcNAc...) asparagine glycan. The 99-residue stretch at 83–181 (TLFAIEDASF…HGVIGPFSPL (99 aa)) folds into the FAS1 1 domain. Residues 254 to 352 (TILATPNLVS…GISHTLEIPH (99 aa)) enclose the FAS1 2 domain.

The protein belongs to the fasciclin-like AGP family.

The protein localises to the secreted. Its function is as follows. May be a cell surface adhesion protein. The chain is Fasciclin-like arabinogalactan protein 21 (FLA21) from Arabidopsis thaliana (Mouse-ear cress).